We begin with the raw amino-acid sequence, 92 residues long: Elongation factor 1-beta (92 aa).

It belongs to the EF-1-beta/EF-1-delta family.

Its function is as follows. Promotes the exchange of GDP for GTP in EF-1-alpha/GDP, thus allowing the regeneration of EF-1-alpha/GTP that could then be used to form the ternary complex EF-1-alpha/GTP/AAtRNA. The chain is Elongation factor 1-beta from Pyrobaculum neutrophilum (strain DSM 2338 / JCM 9278 / NBRC 100436 / V24Sta) (Thermoproteus neutrophilus).